The primary structure comprises 155 residues: Late embryogenesis abundant protein 2 (155 aa).

Residues 1–155 (MTSHDQSYRA…DKDHFPTNRH (155 aa)) form a disordered region. Composition is skewed to basic and acidic residues over residues 11-21 (GEAKGRTEEKT) and 28-39 (IEDKAQAAKEKA). Residues 40 to 78 (QQAAQTAKDKTSQTAQAAKEKTQQTAQAAKDKTQQTTQA) show a composition bias toward low complexity. 2 repeat units span residues 53 to 63 (TAQAAKEKTQQ) and 64 to 74 (TAQAAKDKTQQ). Residues 53–74 (TAQAAKEKTQQTAQAAKDKTQQ) are 2 X 11 AA approximate tandem repeats of T-A-Q-A-A-K-E-K-T-Q-Q. Residues 79 to 95 (TKEKAQDTTGRAKEKGS) are compositionally biased toward basic and acidic residues. Positions 97-120 (MGQSTKETAQSGKDNSAGFLQQTG) are enriched in polar residues. Over residues 144-155 (DQDKDHFPTNRH) the composition is skewed to basic and acidic residues.

This sequence belongs to the LEA type 4 family. Highest expression is found in seeds. No expression detected in adult tissues.

In Cicer arietinum (Chickpea), this protein is Late embryogenesis abundant protein 2.